The chain runs to 167 residues: Ribosome maturation factor RimM (167 aa).

In terms of domain architecture, PRC barrel spans 94–165 (ENEFYYSDII…KIIITPMEGL (72 aa)).

It belongs to the RimM family. As to quaternary structure, binds ribosomal protein uS19.

It localises to the cytoplasm. Its function is as follows. An accessory protein needed during the final step in the assembly of 30S ribosomal subunit, possibly for assembly of the head region. Essential for efficient processing of 16S rRNA. May be needed both before and after RbfA during the maturation of 16S rRNA. It has affinity for free ribosomal 30S subunits but not for 70S ribosomes. In Staphylococcus aureus (strain MRSA252), this protein is Ribosome maturation factor RimM.